A 715-amino-acid polypeptide reads, in one-letter code: Fatty acid oxidation complex subunit alpha (715 aa).

The enoyl-CoA hydratase stretch occupies residues 1-190; that stretch reads MTTTSAFMLN…KAGLVDDVVP (190 aa). The tract at residues 306-714 is 3-hydroxyacyl-CoA dehydrogenase; sequence GPLNSVGILG…FWTNGETDQG (409 aa).

The protein in the N-terminal section; belongs to the enoyl-CoA hydratase/isomerase family. This sequence in the central section; belongs to the 3-hydroxyacyl-CoA dehydrogenase family. As to quaternary structure, heterotetramer of two alpha chains (FadJ) and two beta chains (FadI).

The protein resides in the cytoplasm. The catalysed reaction is a (3S)-3-hydroxyacyl-CoA = a (2E)-enoyl-CoA + H2O. It carries out the reaction a 4-saturated-(3S)-3-hydroxyacyl-CoA = a (3E)-enoyl-CoA + H2O. The enzyme catalyses a (3S)-3-hydroxyacyl-CoA + NAD(+) = a 3-oxoacyl-CoA + NADH + H(+). It catalyses the reaction (3S)-3-hydroxybutanoyl-CoA = (3R)-3-hydroxybutanoyl-CoA. It functions in the pathway lipid metabolism; fatty acid beta-oxidation. Catalyzes the formation of a hydroxyacyl-CoA by addition of water on enoyl-CoA. Also exhibits 3-hydroxyacyl-CoA epimerase and 3-hydroxyacyl-CoA dehydrogenase activities. In Salmonella paratyphi A (strain ATCC 9150 / SARB42), this protein is Fatty acid oxidation complex subunit alpha.